A 311-amino-acid polypeptide reads, in one-letter code: Tryptophan 2,3-dioxygenase (311 aa).

The tract at residues 1 to 37 (MQPPGGDAPAGCPFSGARAAQPAQAAHEAPHVPGEAD) is disordered. Low complexity predominate over residues 17-27 (ARAAQPAQAAH). Residues 80 to 84 (FIIQH), Y142, and R146 contribute to the substrate site. H269 serves as a coordination point for heme. Residue T283 participates in substrate binding.

It belongs to the tryptophan 2,3-dioxygenase family. In terms of assembly, homotetramer. Heme serves as cofactor.

It catalyses the reaction L-tryptophan + O2 = N-formyl-L-kynurenine. Its pathway is amino-acid degradation; L-tryptophan degradation via kynurenine pathway; L-kynurenine from L-tryptophan: step 1/2. Functionally, heme-dependent dioxygenase that catalyzes the oxidative cleavage of the L-tryptophan (L-Trp) pyrrole ring and converts L-tryptophan to N-formyl-L-kynurenine. Catalyzes the oxidative cleavage of the indole moiety. This Burkholderia cenocepacia (strain ATCC BAA-245 / DSM 16553 / LMG 16656 / NCTC 13227 / J2315 / CF5610) (Burkholderia cepacia (strain J2315)) protein is Tryptophan 2,3-dioxygenase.